The chain runs to 345 residues: Sesquiterpene synthase GALMADRAFT_104215 (345 aa).

Mg(2+)-binding residues include Asp-91, Asn-226, Ser-230, and Glu-234. The DDXXD motif signature appears at 91-95; sequence DEFTD. (2E,6E)-farnesyl diphosphate is bound by residues Arg-316 and Tyr-317.

This sequence belongs to the terpene synthase family. It depends on Mg(2+) as a cofactor.

The enzyme catalyses (2E,6E)-farnesyl diphosphate = beta-gurjunene + diphosphate. Functionally, terpene cyclase that catalyzes the cyclization of farnesyl diphosphate (FPP) to beta-gurjunene. The polypeptide is Sesquiterpene synthase GALMADRAFT_104215 (Galerina marginata (strain CBS 339.88)).